We begin with the raw amino-acid sequence, 277 residues long: Undecaprenyl-diphosphatase (277 aa).

The next 7 membrane-spanning stretches (helical) occupy residues 3–23, 43–63, 85–105, 109–129, 189–209, 218–238, and 249–269; these read IVLLIKAAIMGLVEGLTEFLP, VGKVFDIAIQTGAIFAVILVY, LNVLIAFVPAVVLGLLFGKAI, LFTPVVVASTFIIGGFIILWA, TDFSFYLAIPTLIGAGVYSLF, ADLPTFAVGLVVSFFSAWLCI, and SFVGFAYYRIVFGVVVLATAW.

It belongs to the UppP family.

It is found in the cell inner membrane. It carries out the reaction di-trans,octa-cis-undecaprenyl diphosphate + H2O = di-trans,octa-cis-undecaprenyl phosphate + phosphate + H(+). Its function is as follows. Catalyzes the dephosphorylation of undecaprenyl diphosphate (UPP). Confers resistance to bacitracin. The polypeptide is Undecaprenyl-diphosphatase (Albidiferax ferrireducens (strain ATCC BAA-621 / DSM 15236 / T118) (Rhodoferax ferrireducens)).